The primary structure comprises 654 residues: Glycogen debranching enzyme (654 aa).

D336 (nucleophile) is an active-site residue. E371 (proton donor) is an active-site residue. Residues 459–484 (EANGEENRDGTNSNYSDNHGKEGLGG) form a disordered region.

Belongs to the glycosyl hydrolase 13 family.

It carries out the reaction Hydrolysis of (1-&gt;6)-alpha-D-glucosidic linkages to branches with degrees of polymerization of three or four glucose residues in limit dextrin.. It functions in the pathway glycan degradation; glycogen degradation. Its function is as follows. Removes maltotriose and maltotetraose chains that are attached by 1,6-alpha-linkage to the limit dextrin main chain, generating a debranched limit dextrin. The chain is Glycogen debranching enzyme from Salmonella typhi.